The sequence spans 301 residues: tRNA uridine(34) hydroxylase (301 aa).

A Rhodanese domain is found at 121–212 (NDKDTLVLDS…YLKNIKKKES (92 aa)). C172 serves as the catalytic Cysteine persulfide intermediate.

The protein belongs to the TrhO family.

The enzyme catalyses uridine(34) in tRNA + AH2 + O2 = 5-hydroxyuridine(34) in tRNA + A + H2O. Its function is as follows. Catalyzes oxygen-dependent 5-hydroxyuridine (ho5U) modification at position 34 in tRNAs. The chain is tRNA uridine(34) hydroxylase from Pelagibacter ubique (strain HTCC1062).